A 644-amino-acid polypeptide reads, in one-letter code: Polyglycine hydrolase (644 aa).

Residues 1-23 (MYTSRSLFSTLASCLSLATLVAS) form the signal peptide. 5 N-linked (GlcNAc...) asparagine glycosylation sites follow: asparagine 100, asparagine 144, asparagine 159, asparagine 244, and asparagine 340. A disulfide bridge connects residues cysteine 149 and cysteine 183. Serine 369 is a catalytic residue. Residues asparagine 389, asparagine 410, asparagine 443, and asparagine 486 are each glycosylated (N-linked (GlcNAc...) asparagine).

Belongs to the peptidase S12 family.

The protein localises to the secreted. It catalyses the reaction a glycyl-glycyl-[protein] + H2O = N-terminal glycyl-[protein] + [protein]-C-terminal glycine. With respect to regulation, not inhibited by phenylmethylsulfonyl fluoride (PMSF; serine peptidase class S1 inhibitor), clavulanic acid (beta-lactamase inhibitor) or ampicillin (penicillin-binding protein (PBP) inhibitor). Its function is as follows. Serine-type endopeptidase that cleaves Gly-Gly bonds in the polyglycine linker of host plant class IV chitinases to disrupt their chitin-binding, and thereby plays a role in lowering the defense responses of the host to the fungus. Degrades Z.mays Endochitinase A (CHIA). Has low proteolytic activity on Z.mays Endochitinase B (CHIB). The polypeptide is Polyglycine hydrolase (Cochliobolus carbonum (strain 26-R-13) (Maize leaf spot fungus)).